We begin with the raw amino-acid sequence, 655 residues long: Chaperone protein DnaK 3 (655 aa).

Thr-197 bears the Phosphothreonine; by autocatalysis mark.

This sequence belongs to the heat shock protein 70 family.

In terms of biological role, acts as a chaperone. The protein is Chaperone protein DnaK 3 of Synechococcus sp. (strain ATCC 27144 / PCC 6301 / SAUG 1402/1) (Anacystis nidulans).